Reading from the N-terminus, the 454-residue chain is Glutamyl-tRNA reductase (454 aa).

Substrate is bound by residues threonine 49–arginine 52, serine 109, glutamate 114–glutamine 116, and glutamine 120. Cysteine 50 functions as the Nucleophile in the catalytic mechanism. An NADP(+)-binding site is contributed by glycine 189 to serine 194. Basic and acidic residues predominate over residues aspartate 432–glutamine 442. Residues aspartate 432–threonine 454 form a disordered region.

The protein belongs to the glutamyl-tRNA reductase family. As to quaternary structure, homodimer.

The catalysed reaction is (S)-4-amino-5-oxopentanoate + tRNA(Glu) + NADP(+) = L-glutamyl-tRNA(Glu) + NADPH + H(+). It functions in the pathway porphyrin-containing compound metabolism; protoporphyrin-IX biosynthesis; 5-aminolevulinate from L-glutamyl-tRNA(Glu): step 1/2. Functionally, catalyzes the NADPH-dependent reduction of glutamyl-tRNA(Glu) to glutamate 1-semialdehyde (GSA). In Shouchella clausii (strain KSM-K16) (Alkalihalobacillus clausii), this protein is Glutamyl-tRNA reductase.